Here is a 305-residue protein sequence, read N- to C-terminus: Zinc transporter ZIP9 (305 aa).

A helical membrane pass occupies residues 7–27 (ICLLSLAMLVACYVAGIIPLA). N-linked (GlcNAc...) asparagine glycosylation occurs at asparagine 29. The next 5 helical transmembrane spans lie at 35-55 (LKLV…AVIV), 104-124 (AYIG…DQIG), 144-164 (ITTT…LGAA), 174-194 (LIVF…LVSF), and 208-228 (HLLV…LGLS). Asparagine 239 is a glycosylation site (N-linked (GlcNAc...) asparagine). The next 2 membrane-spanning stretches (helical) occupy residues 242–262 (GVAM…HVLP) and 284–304 (LEVA…IGHH).

Belongs to the ZIP transporter (TC 2.A.5) family.

It localises to the golgi apparatus. Its subcellular location is the trans-Golgi network membrane. The protein localises to the cell membrane. It is found in the cytoplasm. The protein resides in the perinuclear region. It localises to the mitochondrion. Its subcellular location is the nucleus. It carries out the reaction Zn(2+)(in) = Zn(2+)(out). Functionally, transports zinc ions across cell and organelle membranes into the cytoplasm and regulates intracellular zinc homeostasis. Participates in the zinc ions efflux out of the secretory compartments. Regulates intracellular zinc level, resulting in the enhancement of AKT1 and MAPK3/MAPK1 (Erk1/2) phosphorylation in response to the BCR activation. Also functions as a membrane androgen receptor that mediates, through a G protein, the non-classical androgen signaling pathway, characterized by the activation of MAPK3/MAPK1 (Erk1/2) and transcription factors CREB1 or ATF1. Moreover, has dual functions as a membrane-bound androgen receptor and as an androgen-dependent zinc transporter both of which are mediated through an inhibitory G protein (Gi) that mediates both MAP kinase and zinc signaling leading to the androgen-dependent apoptotic process. This is Zinc transporter ZIP9 from Gallus gallus (Chicken).